A 61-amino-acid chain; its full sequence is Small ribosomal subunit protein uS14 (61 aa).

Residues Cys24, Cys27, Cys40, and Cys43 each contribute to the Zn(2+) site.

The protein belongs to the universal ribosomal protein uS14 family. Zinc-binding uS14 subfamily. As to quaternary structure, part of the 30S ribosomal subunit. Contacts proteins S3 and S10. It depends on Zn(2+) as a cofactor.

Functionally, binds 16S rRNA, required for the assembly of 30S particles and may also be responsible for determining the conformation of the 16S rRNA at the A site. The sequence is that of Small ribosomal subunit protein uS14 from Thermoanaerobacter sp. (strain X514).